The following is a 186-amino-acid chain: Cytochrome c oxidase subunit 4, mitochondrial (186 aa).

Residues Met-1–Cys-31 constitute a mitochondrion transit peptide. Residues Cys-118, His-126, Cys-142, and Cys-145 each coordinate Zn(2+).

The protein belongs to the cytochrome c oxidase subunit 5B family. Component of the cytochrome c oxidase (complex IV, CIV), a multisubunit enzyme composed of 11 subunits. The complex is composed of a catalytic core of 3 subunits Cox1, Cox2 and Cox3, encoded in the mitochondrial DNA, and 8 supernumerary subunits Cox4, Cox5a/Cox5, Cox6, Cox7, Cox8, Cox7a/Cox9, Cox6b/Cox12 and Cox6a/Cox13, which are encoded in the nuclear genome. The complex exists as a monomer or a dimer and forms respiratory supercomplexes (SCs) in the inner mitochondrial membrane with NADH-ubiquinone oxidoreductase (complex I, CI) and ubiquinol-cytochrome c oxidoreductase (cytochrome b-c1 complex, complex III, CIII), resulting in various different assemblies (supercomplexes I(1)IV(1), I(1)III(3)IV(2), III(2)IV(1) and III(2)IV(2) as well as larger supercomplexes of compositions like I(1)III(2)IV(5-6)).

The protein localises to the mitochondrion inner membrane. The protein operates within energy metabolism; oxidative phosphorylation. Its function is as follows. Component of the cytochrome c oxidase, the last enzyme in the mitochondrial electron transport chain which drives oxidative phosphorylation. The respiratory chain contains 3 multisubunit complexes succinate dehydrogenase (complex II, CII), ubiquinol-cytochrome c oxidoreductase (cytochrome b-c1 complex, complex III, CIII) and cytochrome c oxidase (complex IV, CIV), that cooperate to transfer electrons derived from NADH and succinate to molecular oxygen, creating an electrochemical gradient over the inner membrane that drives transmembrane transport and the ATP synthase. Cytochrome c oxidase is the component of the respiratory chain that catalyzes the reduction of oxygen to water. Electrons originating from reduced cytochrome c in the intermembrane space (IMS) are transferred via the dinuclear copper A center (CU(A)) of Cox2 and heme A of Cox1 to the active site in Cox1, a binuclear center (BNC) formed by heme A3 and copper B (CU(B)). The BNC reduces molecular oxygen to 2 water molecules using 4 electrons from cytochrome c in the IMS and 4 protons from the mitochondrial matrix. The sequence is that of Cytochrome c oxidase subunit 4, mitochondrial (cox-4) from Neurospora crassa (strain ATCC 24698 / 74-OR23-1A / CBS 708.71 / DSM 1257 / FGSC 987).